The following is a 92-amino-acid chain: Putative transition state regulator Abh (92 aa).

In terms of domain architecture, SpoVT-AbrB spans 5–50 (GVVRKVDELGRIVMPIELRRALDIAIKDSIEFFVDGDKIILKKYKP).

To B.subtilis AbrB and SpoVT.

The protein is Putative transition state regulator Abh (abh) of Bacillus subtilis (strain 168).